The following is a 353-amino-acid chain: Photosystem II protein D1 (353 aa).

T2 carries the N-acetylthreonine modification. Residue T2 is modified to Phosphothreonine. Helical transmembrane passes span 29-46 (YIGW…TATS), 118-133 (HFLL…EWEL), and 142-156 (WIAV…AATA). H118 lines the chlorophyll a pocket. Y126 provides a ligand contact to pheophytin a. 2 residues coordinate [CaMn4O5] cluster: D170 and E189. A helical transmembrane segment spans residues 197–218 (FHMLGVAGVFGGSLFSAMHGSL). Chlorophyll a is bound at residue H198. Residues H215 and 264-265 (SF) each bind a quinone. Residue H215 coordinates Fe cation. H272 provides a ligand contact to Fe cation. The chain crosses the membrane as a helical span at residues 274–288 (FLAAWPVIGIWFTAL). 4 residues coordinate [CaMn4O5] cluster: H332, E333, D342, and A344. A propeptide spanning residues 345–353 (SVEAPSVNG) is cleaved from the precursor.

The protein belongs to the reaction center PufL/M/PsbA/D family. In terms of assembly, PSII is composed of 1 copy each of membrane proteins PsbA, PsbB, PsbC, PsbD, PsbE, PsbF, PsbH, PsbI, PsbJ, PsbK, PsbL, PsbM, PsbT, PsbX, PsbY, PsbZ, Psb30/Ycf12, at least 3 peripheral proteins of the oxygen-evolving complex and a large number of cofactors. It forms dimeric complexes. It depends on The D1/D2 heterodimer binds P680, chlorophylls that are the primary electron donor of PSII, and subsequent electron acceptors. It shares a non-heme iron and each subunit binds pheophytin, quinone, additional chlorophylls, carotenoids and lipids. D1 provides most of the ligands for the Mn4-Ca-O5 cluster of the oxygen-evolving complex (OEC). There is also a Cl(-1) ion associated with D1 and D2, which is required for oxygen evolution. The PSII complex binds additional chlorophylls, carotenoids and specific lipids. as a cofactor. Tyr-161 forms a radical intermediate that is referred to as redox-active TyrZ, YZ or Y-Z. In terms of processing, C-terminally processed by CTPA; processing is essential to allow assembly of the oxygen-evolving complex and thus photosynthetic growth.

The protein localises to the plastid. The protein resides in the chloroplast thylakoid membrane. The catalysed reaction is 2 a plastoquinone + 4 hnu + 2 H2O = 2 a plastoquinol + O2. Functionally, photosystem II (PSII) is a light-driven water:plastoquinone oxidoreductase that uses light energy to abstract electrons from H(2)O, generating O(2) and a proton gradient subsequently used for ATP formation. It consists of a core antenna complex that captures photons, and an electron transfer chain that converts photonic excitation into a charge separation. The D1/D2 (PsbA/PsbD) reaction center heterodimer binds P680, the primary electron donor of PSII as well as several subsequent electron acceptors. The sequence is that of Photosystem II protein D1 from Chlorokybus atmophyticus (Soil alga).